Consider the following 441-residue polypeptide: ATP-dependent protease ATPase subunit HslU (441 aa).

ATP-binding positions include Ile-18, 60 to 65, Asp-254, Glu-319, and Arg-391; that span reads GVGKTE.

The protein belongs to the ClpX chaperone family. HslU subfamily. In terms of assembly, a double ring-shaped homohexamer of HslV is capped on each side by a ring-shaped HslU homohexamer. The assembly of the HslU/HslV complex is dependent on binding of ATP.

It localises to the cytoplasm. Its function is as follows. ATPase subunit of a proteasome-like degradation complex; this subunit has chaperone activity. The binding of ATP and its subsequent hydrolysis by HslU are essential for unfolding of protein substrates subsequently hydrolyzed by HslV. HslU recognizes the N-terminal part of its protein substrates and unfolds these before they are guided to HslV for hydrolysis. The chain is ATP-dependent protease ATPase subunit HslU from Shewanella piezotolerans (strain WP3 / JCM 13877).